Reading from the N-terminus, the 248-residue chain is Probable phosphatase VCM66_A0854 (248 aa).

Zn(2+) is bound by residues histidine 8, histidine 10, histidine 16, histidine 41, glutamate 74, histidine 102, histidine 132, aspartate 194, and histidine 196.

It belongs to the PHP family. The cofactor is Zn(2+).

The sequence is that of Probable phosphatase VCM66_A0854 from Vibrio cholerae serotype O1 (strain M66-2).